Reading from the N-terminus, the 106-residue chain is uncharacterized protein (106 aa).

The tract at residues 54-106 (RSTLVATSPRRRSLVQQRRPPLREQNGGSGSSCVSSGGSASTVKTPGSRRASK) is disordered. The span at 84–94 (SSCVSSGGSAS) shows a compositional bias: low complexity.

This is an uncharacterized protein from Human adenovirus C serotype 2 (HAdV-2).